We begin with the raw amino-acid sequence, 102 residues long: Salivary thrombin inhibitor anophelin (102 aa).

Residues 1–21 (MATKLIVIAFLCAALIAVVQS) form the signal peptide. The disordered stretch occupies residues 25-102 (YAQGEEPTYD…SDSSSESTEH (78 aa)). Polar residues predominate over residues 59–69 (SQLTEYANTAQ). The segment at 70 to 73 (DPGR) is blocks active site cleft of host thrombin in a reverse direction compared to substrates. Positions 80–90 (QANSNNGDQLP) are enriched in polar residues. Positions 91-102 (SQSDSSSESTEH) are enriched in low complexity.

It belongs to the anophelin family. As to quaternary structure, interacts with human F2 (thrombin); the interaction results in thrombin inhibition.

It localises to the secreted. Salivary protein with anticoagulant activity that inhibits host thrombin (F2). In Anopheles funestus (African malaria mosquito), this protein is Salivary thrombin inhibitor anophelin.